The primary structure comprises 2282 residues: Protein Ycf2 (2282 aa).

Residue G1635 to S1642 coordinates ATP.

Belongs to the Ycf2 family.

It localises to the plastid. It is found in the chloroplast stroma. Probable ATPase of unknown function. Its presence in a non-photosynthetic plant (Epifagus virginiana) and experiments in tobacco indicate that it has an essential function which is probably not related to photosynthesis. The polypeptide is Protein Ycf2 (Populus alba (White poplar)).